The sequence spans 248 residues: Adenosylcobinamide-GDP ribazoletransferase (248 aa).

6 helical membrane-spanning segments follow: residues 34–54, 58–78, 113–133, 139–159, 185–205, and 227–247; these read LVFA…LFYI, FFPP…LTGG, AVLA…SIPL, ALLL…GSTV, IIYF…LAAA, and DILG…FYLF.

The protein belongs to the CobS family. The cofactor is Mg(2+).

The protein localises to the cell membrane. It catalyses the reaction alpha-ribazole + adenosylcob(III)inamide-GDP = adenosylcob(III)alamin + GMP + H(+). The enzyme catalyses alpha-ribazole 5'-phosphate + adenosylcob(III)inamide-GDP = adenosylcob(III)alamin 5'-phosphate + GMP + H(+). The protein operates within cofactor biosynthesis; adenosylcobalamin biosynthesis; adenosylcobalamin from cob(II)yrinate a,c-diamide: step 7/7. Joins adenosylcobinamide-GDP and alpha-ribazole to generate adenosylcobalamin (Ado-cobalamin). Also synthesizes adenosylcobalamin 5'-phosphate from adenosylcobinamide-GDP and alpha-ribazole 5'-phosphate. This Acetivibrio thermocellus (strain ATCC 27405 / DSM 1237 / JCM 9322 / NBRC 103400 / NCIMB 10682 / NRRL B-4536 / VPI 7372) (Clostridium thermocellum) protein is Adenosylcobinamide-GDP ribazoletransferase.